The chain runs to 273 residues: BTB and MATH domain-containing protein 15 (273 aa).

An MATH domain is found at 7 to 123 (EFVFHHTFKD…DNSFTIEACV (117 aa)). The BTB domain maps to 147-206 (SDVILVVGDEKFYVLKLFLASHSSYFNALFLGKFKEADQSEVTLQNIDPTDFQSLLEVLY).

In terms of assembly, interacts with cul-3.

Its pathway is protein modification; protein ubiquitination. Probable substrate-specific adapter of an E3 ubiquitin-protein ligase complex which mediates the ubiquitination and subsequent proteasomal degradation of target proteins. This chain is BTB and MATH domain-containing protein 15 (bath-15), found in Caenorhabditis elegans.